Here is an 807-residue protein sequence, read N- to C-terminus: AP-5 complex subunit zeta-1 (807 aa).

In terms of assembly, probably part of the adaptor protein complex 5 (AP-5) a tetramer composed of AP5B1, AP5M1, AP5S1 and AP5Z1. Interacts with ZFYVE26 and SPG11.

Its subcellular location is the cytoplasm. The protein localises to the nucleus. In terms of biological role, as part of AP-5, a probable fifth adaptor protein complex it may be involved in endosomal transport. The protein is AP-5 complex subunit zeta-1 (Ap5z1) of Mus musculus (Mouse).